Reading from the N-terminus, the 250-residue chain is MSRAAMDRAEFERALRDKGRYYHIHHPFHVAMYEGRASREQIQGWVANRFYYQVNIPLKDAAILANCPDREVRREWIQRILDHDGAPGEAGGIEAWLRLAEAVGLEREQVLSEERVLPGVRFAVDAYVNFARRASWQEAASSSLTELFAPQIHQSRLDSWPRHYPWIEAAGYEYFRSRLAQARRDVEHGLRITLEHYRTREAQERMLDILQFKLDVLWSMLDAMSMAYELERPPYHTVTRERVWHRGLAS.

Belongs to the PqqC family.

It catalyses the reaction 6-(2-amino-2-carboxyethyl)-7,8-dioxo-1,2,3,4,7,8-hexahydroquinoline-2,4-dicarboxylate + 3 O2 = pyrroloquinoline quinone + 2 H2O2 + 2 H2O + H(+). The protein operates within cofactor biosynthesis; pyrroloquinoline quinone biosynthesis. In terms of biological role, ring cyclization and eight-electron oxidation of 3a-(2-amino-2-carboxyethyl)-4,5-dioxo-4,5,6,7,8,9-hexahydroquinoline-7,9-dicarboxylic-acid to PQQ. The polypeptide is Pyrroloquinoline-quinone synthase (Pseudomonas aeruginosa (strain LESB58)).